The chain runs to 483 residues: Glutamyl-tRNA(Gln) amidotransferase subunit A (483 aa).

Catalysis depends on charge relay system residues lysine 76 and serine 151. The active-site Acyl-ester intermediate is serine 175.

Belongs to the amidase family. GatA subfamily. In terms of assembly, heterotrimer of A, B and C subunits.

The enzyme catalyses L-glutamyl-tRNA(Gln) + L-glutamine + ATP + H2O = L-glutaminyl-tRNA(Gln) + L-glutamate + ADP + phosphate + H(+). Its function is as follows. Allows the formation of correctly charged Gln-tRNA(Gln) through the transamidation of misacylated Glu-tRNA(Gln) in organisms which lack glutaminyl-tRNA synthetase. The reaction takes place in the presence of glutamine and ATP through an activated gamma-phospho-Glu-tRNA(Gln). This Pseudomonas putida (strain GB-1) protein is Glutamyl-tRNA(Gln) amidotransferase subunit A.